Consider the following 151-residue polypeptide: Phosphoribosyl-AMP cyclohydrolase (151 aa).

D94 is a binding site for Mg(2+). Position 95 (C95) interacts with Zn(2+). The Mg(2+) site is built by D96 and D98. Residues C112 and C119 each coordinate Zn(2+).

The protein belongs to the PRA-CH family. In terms of assembly, homodimer. Mg(2+) serves as cofactor. Zn(2+) is required as a cofactor.

The protein resides in the cytoplasm. The enzyme catalyses 1-(5-phospho-beta-D-ribosyl)-5'-AMP + H2O = 1-(5-phospho-beta-D-ribosyl)-5-[(5-phospho-beta-D-ribosylamino)methylideneamino]imidazole-4-carboxamide. It functions in the pathway amino-acid biosynthesis; L-histidine biosynthesis; L-histidine from 5-phospho-alpha-D-ribose 1-diphosphate: step 3/9. Catalyzes the hydrolysis of the adenine ring of phosphoribosyl-AMP. The chain is Phosphoribosyl-AMP cyclohydrolase from Rhodopseudomonas palustris (strain TIE-1).